A 304-amino-acid polypeptide reads, in one-letter code: Homoserine kinase (304 aa).

90 to 100 (PLARGLGSSAS) lines the ATP pocket.

This sequence belongs to the GHMP kinase family. Homoserine kinase subfamily.

The protein resides in the cytoplasm. The enzyme catalyses L-homoserine + ATP = O-phospho-L-homoserine + ADP + H(+). It participates in amino-acid biosynthesis; L-threonine biosynthesis; L-threonine from L-aspartate: step 4/5. In terms of biological role, catalyzes the ATP-dependent phosphorylation of L-homoserine to L-homoserine phosphate. The sequence is that of Homoserine kinase from Staphylococcus aureus (strain NCTC 8325 / PS 47).